A 226-amino-acid polypeptide reads, in one-letter code: MLCCMRRTKQVEKNDEDQKIEQDGVKPEDKAHKAATKIQASFRGHITRKKLKDEKKGDAPAAEAEAKEKDDAPVADGVEKKEGDGSATTDAAPATSPKAEEPSKAGDAPSEEKKGEGDAAPSEEKAGSAETESAAKATTDNSPSSKAEDGPAKEEPKQADVPAAVTDAAATTPAAEDAAKAAQPPTETAESSQAEEEKEAVDEAKPKESARQDEGKEDPEADQEHA.

Residues 1-226 are disordered; sequence MLCCMRRTKQ…EDPEADQEHA (226 aa). S-palmitoyl cysteine attachment occurs at residues C3 and C4. Over residues 9–32 the composition is skewed to basic and acidic residues; sequence KQVEKNDEDQKIEQDGVKPEDKAH. The 30-residue stretch at 31-60 folds into the IQ domain; the sequence is AHKAATKIQASFRGHITRKKLKDEKKGDAP. The residue at position 41 (S41) is a Phosphoserine; by PHK and PKC. Residues 51-84 are compositionally biased toward basic and acidic residues; that stretch reads LKDEKKGDAPAAEAEAKEKDDAPVADGVEKKEGD. The segment covering 85 to 97 has biased composition (low complexity); that stretch reads GSATTDAAPATSP. Phosphoserine occurs at positions 86 and 96. Residues 98-127 are compositionally biased toward basic and acidic residues; sequence KAEEPSKAGDAPSEEKKGEGDAAPSEEKAG. The span at 128 to 139 shows a compositional bias: low complexity; the sequence is SAETESAAKATT. Phosphoserine occurs at positions 142, 144, and 145. A compositionally biased stretch (basic and acidic residues) spans 146–158; that stretch reads KAEDGPAKEEPKQ. Positions 159–192 are enriched in low complexity; sequence ADVPAAVTDAAATTPAAEDAAKAAQPPTETAESS. A Phosphothreonine modification is found at T172. 2 positions are modified to phosphoserine: S191 and S192. Positions 201-214 are enriched in basic and acidic residues; sequence VDEAKPKESARQDE. Residues 215-226 are compositionally biased toward acidic residues; it reads GKEDPEADQEHA.

It belongs to the neuromodulin family. As to quaternary structure, identified in a complex containing FGFR4, NCAM1, CDH2, PLCG1, FRS2, SRC, SHC1, GAP43 and CTTN. Interacts (via IQ domain) with calmodulin. Binds calmodulin with a greater affinity in the absence of Ca(2+) than in its presence. In terms of processing, phosphorylated. Phosphorylation of this protein by a protein kinase C is specifically correlated with certain forms of synaptic plasticity. Palmitoylated by ZDHHC3. Palmitoylation is regulated by ARF6 and is essential for plasma membrane association and axonal and dendritic filopodia induction. Deacylated by LYPLA2. As to expression, expressed in hippocampal neurons, with highest levels of expression in the CA4 and CA3 neurons and lower levels in CA1 neurons. Expressed in the dorsal root ganglion.

It localises to the cell membrane. The protein resides in the cell projection. It is found in the growth cone. Its subcellular location is the growth cone membrane. The protein localises to the synapse. It localises to the filopodium membrane. The protein resides in the perikaryon. It is found in the dendrite. Its subcellular location is the axon. The protein localises to the cytoplasm. Its function is as follows. This protein is associated with nerve growth. It is a major component of the motile 'growth cones' that form the tips of elongating axons. Plays a role in axonal and dendritic filopodia induction. In Rattus norvegicus (Rat), this protein is Neuromodulin (Gap43).